The primary structure comprises 541 residues: Sorting nexin-27 (541 aa).

The segment at 1 to 42 (MADEDGEGIHPSAPHRNGGGGGGGGSGLHCAGNGGGGGGGPR) is disordered. Over residues 17–41 (NGGGGGGGGSGLHCAGNGGGGGGGP) the composition is skewed to gly residues. The region spanning 43–136 (VVRIVKSESG…ELILTVLSVP (94 aa)) is the PDZ domain. Residues Ser51 and Ser62 each carry the phosphoserine modification. The region spanning 161 to 269 (QAVPISVPRY…EFLSESDENY (109 aa)) is the PX domain. A Ras-associating domain is found at 273–362 (SDVELRVALP…TCLTIRKWLF (90 aa)). The segment at 273–362 (SDVELRVALP…TCLTIRKWLF (90 aa)) is FERM-like region F1. The interval 373–421 (NDLAVTYFFHQAVDDVKKGYIKAEEKSYQLQKLYEQRKMVMYLNMLRTC) is FERM-like region F2. The interval 425–525 (NEIIFPHCAC…RVFCELKWRK (101 aa)) is FERM-like region F3.

The protein belongs to the sorting nexin family. Core component of the SNX27-retromer, a multiprotein complex composed of SNX27, the WASH complex and the retromer complex. Interacts (via PDZ domain) with a number of target transmembrane proteins (via PDZ-binding motif): ABCC4, ADRB2, ARHGEF7, GRIA1, GRIA2, GRIN1, GRIN2A GRIN2C, KCNJ6, KCNJ9 and SLC2A1/GLUT1. Interacts (via the FERM-like regions) with the WASH complex. Interacts with SNX1. Interacts with CYTIP. Isoform 1 and isoform 2 directly interact with DGKZ. Isoform 1 and isoform 2 interact with HT4R isoform 5-HTA(A). Interacts with MCC. Interacts (via PDZ domains) with SLC9A3; directs SLC9A3 membrane insertion from early endosomes to the plasma membrane. In terms of tissue distribution, widely expressed. Expressed in cells of hematopoietic origin (at protein level).

The protein resides in the early endosome membrane. The protein localises to the cytoplasm. It is found in the cytosol. Its function is as follows. Involved in the retrograde transport from endosome to plasma membrane, a trafficking pathway that promotes the recycling of internalized transmembrane proteins. Following internalization, endocytosed transmembrane proteins are delivered to early endosomes and recycled to the plasma membrane instead of being degraded in lysosomes. SNX27 specifically binds and directs sorting of a subset of transmembrane proteins containing a PDZ-binding motif at the C-terminus: following interaction with target transmembrane proteins, associates with the retromer complex, preventing entry into the lysosomal pathway, and promotes retromer-tubule based plasma membrane recycling. SNX27 also binds with the WASH complex. Interacts with membranes containing phosphatidylinositol-3-phosphate (PtdIns(3P)). May participate in establishment of natural killer cell polarity. Recruits CYTIP to early endosomes. This chain is Sorting nexin-27 (SNX27), found in Homo sapiens (Human).